Reading from the N-terminus, the 370-residue chain is GMP synthase [glutamine-hydrolyzing] subunit B (370 aa).

The 187-residue stretch at 3-189 (FDPQKFVDEI…LGLPRDIYNR (187 aa)) folds into the GMPS ATP-PPase domain. 29-35 (SGGVDST) provides a ligand contact to ATP.

In terms of assembly, heterodimer composed of a glutamine amidotransferase subunit (A) and a GMP-binding subunit (B).

It carries out the reaction XMP + L-glutamine + ATP + H2O = GMP + L-glutamate + AMP + diphosphate + 2 H(+). It functions in the pathway purine metabolism; GMP biosynthesis; GMP from XMP (L-Gln route): step 1/1. In terms of biological role, catalyzes the synthesis of GMP from XMP. In Sulfurisphaera tokodaii (strain DSM 16993 / JCM 10545 / NBRC 100140 / 7) (Sulfolobus tokodaii), this protein is GMP synthase [glutamine-hydrolyzing] subunit B (guaAB).